A 373-amino-acid polypeptide reads, in one-letter code: XK-related protein 9 (373 aa).

8 consecutive transmembrane segments (helical) span residues 8 to 28 (FMMSVLGIIIYVTDLVADIVL), 38 to 58 (YVLGVLTLSFVLCGTLIVHCF), 166 to 186 (MVIMVSCCAISWSTVDYQIAL), 206 to 226 (LFYKLLTLLSWMLSVVLLLFV), 230 to 250 (VALLLLLFLWITGFIWAFINH), 256 to 276 (SVSMEFLYRIVVGFILVFTFF), 295 to 315 (VLGTLGILTVFWIYPLSIFNS), and 318 to 338 (FIPISATIVLALLLGIIFLGV).

The protein belongs to the XK family. Post-translationally, undergoes proteolytic processing by caspase-3 (CASP3), caspase-6 (CASP6) and caspase-7 (CASP7) to generate the XK-related protein 9, processed form, leading to its activation. As to expression, highly expressed in the small intestines; weakly expressed in the pancreas, liver, stomach, and large intestines.

It localises to the cell membrane. The enzyme catalyses a 1,2-diacyl-sn-glycero-3-phospho-L-serine(in) = a 1,2-diacyl-sn-glycero-3-phospho-L-serine(out). With respect to regulation, activated upon caspase cleavage to generate the XK-related protein 9, processed form. Does not act prior the onset of apoptosis. Its function is as follows. Phospholipid scramblase that promotes phosphatidylserine exposure on apoptotic cell surface. Phosphatidylserine is a specific marker only present at the surface of apoptotic cells and acts as a specific signal for engulfment. This is XK-related protein 9 from Mus musculus (Mouse).